A 148-amino-acid chain; its full sequence is Small ribosomal subunit protein uS12 (148 aa).

The protein belongs to the universal ribosomal protein uS12 family. Part of the 30S ribosomal subunit.

Functionally, with S4 and S5 plays an important role in translational accuracy. Located at the interface of the 30S and 50S subunits. The protein is Small ribosomal subunit protein uS12 of Methanocaldococcus jannaschii (strain ATCC 43067 / DSM 2661 / JAL-1 / JCM 10045 / NBRC 100440) (Methanococcus jannaschii).